The primary structure comprises 455 residues: Ribosomal protein uS12 methylthiotransferase RimO (455 aa).

The MTTase N-terminal domain maps to 30–140 (PTIGMVSLGC…VLDAVHGAVP (111 aa)). Residues Cys-39, Cys-75, Cys-104, Cys-171, Cys-175, and Cys-178 each contribute to the [4Fe-4S] cluster site. A Radical SAM core domain is found at 157–386 (LTPRHFSYLK…MEKAQAISEV (230 aa)). In terms of domain architecture, TRAM spans 389–455 (AAKVGRRIEV…GEYDIWGRPV (67 aa)).

Belongs to the methylthiotransferase family. RimO subfamily. It depends on [4Fe-4S] cluster as a cofactor.

The protein resides in the cytoplasm. It catalyses the reaction L-aspartate(89)-[ribosomal protein uS12]-hydrogen + (sulfur carrier)-SH + AH2 + 2 S-adenosyl-L-methionine = 3-methylsulfanyl-L-aspartate(89)-[ribosomal protein uS12]-hydrogen + (sulfur carrier)-H + 5'-deoxyadenosine + L-methionine + A + S-adenosyl-L-homocysteine + 2 H(+). Its function is as follows. Catalyzes the methylthiolation of an aspartic acid residue of ribosomal protein uS12. In Cereibacter sphaeroides (strain ATCC 17023 / DSM 158 / JCM 6121 / CCUG 31486 / LMG 2827 / NBRC 12203 / NCIMB 8253 / ATH 2.4.1.) (Rhodobacter sphaeroides), this protein is Ribosomal protein uS12 methylthiotransferase RimO.